A 118-amino-acid polypeptide reads, in one-letter code: 5-hydroxyisourate hydrolase (118 aa).

Histidine 7, arginine 46, and tyrosine 115 together coordinate substrate.

The protein belongs to the transthyretin family. 5-hydroxyisourate hydrolase subfamily. As to quaternary structure, homotetramer.

It catalyses the reaction 5-hydroxyisourate + H2O = 5-hydroxy-2-oxo-4-ureido-2,5-dihydro-1H-imidazole-5-carboxylate + H(+). In terms of biological role, catalyzes the hydrolysis of 5-hydroxyisourate (HIU) to 2-oxo-4-hydroxy-4-carboxy-5-ureidoimidazoline (OHCU). In Brucella melitensis biotype 1 (strain ATCC 23456 / CCUG 17765 / NCTC 10094 / 16M), this protein is 5-hydroxyisourate hydrolase.